The sequence spans 463 residues: NADH dehydrogenase [ubiquinone] iron-sulfur protein 2, mitochondrial (463 aa).

Residues 1-33 (MAALRVLCGLRGVAAQVLRPGAGVRLPIQPSRG) constitute a mitochondrion transit peptide. The residue at position 62 (Lys62) is an N6-acetyllysine. Arg118 is subject to Symmetric dimethylarginine. The [4Fe-4S] cluster site is built by Cys326, Cys332, and Cys347.

This sequence belongs to the complex I 49 kDa subunit family. As to quaternary structure, core subunit of respiratory chain NADH dehydrogenase (Complex I) which is composed of 45 different subunits. Component of the iron-sulfur (IP) fragment of the enzyme. Interacts with NDUFAF3. Interacts with NDUFAF7. Interacts with CERS2. [4Fe-4S] cluster serves as cofactor. In terms of processing, dimethylation at Arg-118 by NDUFAF7 takes place after NDUFS2 assembles into the complex I, leading to stabilize the early intermediate complex.

Its subcellular location is the mitochondrion inner membrane. The enzyme catalyses a ubiquinone + NADH + 5 H(+)(in) = a ubiquinol + NAD(+) + 4 H(+)(out). Core subunit of the mitochondrial membrane respiratory chain NADH dehydrogenase (Complex I) which catalyzes electron transfer from NADH through the respiratory chain, using ubiquinone as an electron acceptor. Essential for the catalytic activity and assembly of complex I. Redox-sensitive, critical component of the oxygen-sensing pathway in the pulmonary vasculature which plays a key role in acute pulmonary oxygen-sensing and hypoxic pulmonary vasoconstriction. Plays an important role in carotid body sensing of hypoxia. Essential for glia-like neural stem and progenitor cell proliferation, differentiation and subsequent oligodendrocyte or neuronal maturation. The sequence is that of NADH dehydrogenase [ubiquinone] iron-sulfur protein 2, mitochondrial (NDUFS2) from Gorilla gorilla gorilla (Western lowland gorilla).